Reading from the N-terminus, the 277-residue chain is Tumor necrosis factor-inducible gene 6 protein (277 aa).

The N-terminal stretch at 1 to 17 is a signal peptide; that stretch reads MIILIYLFLLLWEDTQG. In terms of domain architecture, Link spans 36-129; it reads GVYHREARSG…SERWDAYCYN (94 aa). 3 disulfides stabilise this stretch: Cys58/Cys127, Cys82/Cys103, and Cys135/Cys161. N-linked (GlcNAc...) asparagine glycosylation occurs at Asn118. Positions 135 to 247 constitute a CUB domain; sequence CGGVFTDPKQ…GGFQIKYVAM (113 aa). Glu183, Asp191, Asp232, Ser234, and Val235 together coordinate Ca(2+). Cys188 and Cys210 are joined by a disulfide. An N-linked (GlcNAc...) asparagine glycan is attached at Asn258.

Interacts (via Link domain) with inter-alpha-inhibitor (I-alpha-I) component bikunin. Interacts with ITIH2/HC2; this interaction is required for transesterification of the HC to hyaluronan. Interacts (via Link and CUB domains) with ITIH1. Chondroitin sulfate may be required for the stability of the complex. Interacts (via Link domain) with various C-X-C and C-C chemokines including PF4, CXCL8, CXCL11, CXCL12, CCL2, CCL7, CCL19, CCL21, and CCL27; this interaction interferes with chemokine binding to glycosaminoglycans. Interacts (primarily via Link domain) with BMP2; this interaction is inhibited by hyaluronan. Interacts (via both Link and CUB domains) with TNFSF11. Interacts (via CUB domain) with FN1 (via type III repeats 9-14); this interaction enhances fibronectin fibril assembly. TNFAIP6 may act as a bridging molecule between FN1 and THBS1. N-glycosylated. In terms of tissue distribution, expressed in airway epithelium and submucosal gland (at protein level). Colocalizes with bikunin at the ciliary border. Present in bronchoalveolar lavage fluid (at protein level). Expressed in mesenchymal stem cells. Found in the synovial fluid of patients with rheumatoid arthritis.

Its subcellular location is the secreted. Functionally, major regulator of extracellular matrix organization during tissue remodeling. Catalyzes the transfer of a heavy chain (HC) from inter-alpha-inhibitor (I-alpha-I) complex to hyaluronan. Cleaves the ester bond between the C-terminus of the HC and GalNAc residue of the chondroitin sulfate chain in I-alpha-I complex followed by transesterification of the HC to hyaluronan. In the process, potentiates the antiprotease function of I-alpha-I complex through release of free bikunin. Acts as a catalyst in the formation of hyaluronan-HC oligomers and hyaluronan-rich matrix surrounding the cumulus cell-oocyte complex, a necessary step for oocyte fertilization. Assembles hyaluronan in pericellular matrices that serve as platforms for receptor clustering and signaling. Enables binding of hyaluronan deposited on the surface of macrophages to LYVE1 on lymphatic endothelium and facilitates macrophage extravasation. Alters hyaluronan binding to functionally latent CD44 on vascular endothelium, switching CD44 into an active state that supports leukocyte rolling. Modulates the interaction of chemokines with extracellular matrix components and proteoglycans on endothelial cell surface, likely preventing chemokine gradient formation. In a negative feedback mechanism, may limit excessive neutrophil recruitment at inflammatory sites by antagonizing the association of CXCL8 with glycosaminoglycans on vascular endothelium. Has a role in osteogenesis and bone remodeling. Inhibits BMP2-dependent differentiation of mesenchymal stem cell to osteoblasts. Protects against bone erosion during inflammation by inhibiting TNFSF11/RANKL-dependent osteoclast activation. This Homo sapiens (Human) protein is Tumor necrosis factor-inducible gene 6 protein (TNFAIP6).